The following is a 562-amino-acid chain: Probable malate:quinone oxidoreductase (562 aa).

Positions 530 to 562 are disordered; it reads EVPDKSATPPDPTIAPKHQHSPTHNANSEMQAL. Over residues 551-562 the composition is skewed to polar residues; the sequence is PTHNANSEMQAL.

It belongs to the MQO family. FAD serves as cofactor.

The catalysed reaction is (S)-malate + a quinone = a quinol + oxaloacetate. The protein operates within carbohydrate metabolism; tricarboxylic acid cycle; oxaloacetate from (S)-malate (quinone route): step 1/1. This is Probable malate:quinone oxidoreductase from Xylella fastidiosa (strain 9a5c).